The chain runs to 117 residues: Large ribosomal subunit protein uL18 (117 aa).

It belongs to the universal ribosomal protein uL18 family. In terms of assembly, part of the 50S ribosomal subunit; part of the 5S rRNA/L5/L18/L25 subcomplex. Contacts the 5S and 23S rRNAs.

This is one of the proteins that bind and probably mediate the attachment of the 5S RNA into the large ribosomal subunit, where it forms part of the central protuberance. The protein is Large ribosomal subunit protein uL18 of Phytoplasma australiense.